A 370-amino-acid polypeptide reads, in one-letter code: Cytochrome b (370 aa).

4 helical membrane-spanning segments follow: residues 25–45 (FGSM…FLAV), 69–90 (WLMQ…YIHI), 105–125 (WLSG…GYVL), and 170–190 (FFAL…LHVM). H75 and H89 together coordinate heme b. H174 and H188 together coordinate heme b. Residue H193 coordinates a ubiquinone. Helical transmembrane passes span 218 to 238 (YKDL…VSFS), 280 to 300 (LGGA…PFTH), 312 to 332 (FMQM…WTAT), and 339 to 358 (FTLI…ISNP).

It belongs to the cytochrome b family. The cytochrome bc1 complex contains 3 respiratory subunits (MT-CYB, CYC1 and UQCRFS1), 2 core proteins (UQCRC1 and UQCRC2) and probably 6 low-molecular weight proteins. Requires heme b as cofactor.

The protein localises to the mitochondrion inner membrane. Its function is as follows. Component of the ubiquinol-cytochrome c reductase complex (complex III or cytochrome b-c1 complex) that is part of the mitochondrial respiratory chain. The b-c1 complex mediates electron transfer from ubiquinol to cytochrome c. Contributes to the generation of a proton gradient across the mitochondrial membrane that is then used for ATP synthesis. The protein is Cytochrome b (MT-CYB) of Eunectes notaeus (Yellow anaconda).